An 847-amino-acid chain; its full sequence is uncharacterized protein (847 aa).

The segment covering 116–126 has biased composition (polar residues); sequence TGSSELTTSKT. Disordered regions lie at residues 116 to 153, 208 to 245, and 361 to 392; these read TGSS…TPIE, LKNF…RLSP, and DLEK…SNVI. Positions 128-145 are enriched in basic and acidic residues; that stretch reads IDVDTKEQENRLKQKAEA. Residues 368-378 show a composition bias toward polar residues; sequence SSSASLSTNKL.

This is an uncharacterized protein from Caenorhabditis elegans.